The sequence spans 795 residues: Protocadherin beta-4 (795 aa).

Positions Met1–Leu27 are cleaved as a signal peptide. Topologically, residues Glu28–Leu689 are extracellular. Cadherin domains lie at Val34–Phe132, Val137–Phe241, Tyr246–Leu346, Leu351–Phe450, and Tyr455–Val560. N-linked (GlcNAc...) asparagine glycosylation occurs at Asn183. 2 N-linked (GlcNAc...) asparagine glycosylation sites follow: Asn417 and Asn435. An N-linked (GlcNAc...) asparagine glycan is attached at Asn566. Residues Gly567–Leu670 form the Cadherin 6 domain. Residues Val690–Val710 traverse the membrane as a helical segment. The Cytoplasmic portion of the chain corresponds to Arg711–Ser795.

The protein localises to the cell membrane. In terms of biological role, potential calcium-dependent cell-adhesion protein. May be involved in the establishment and maintenance of specific neuronal connections in the brain. The chain is Protocadherin beta-4 (PCDHB4) from Homo sapiens (Human).